Consider the following 718-residue polypeptide: Cyclic-di-AMP phosphodiesterase PgpH (718 aa).

Over 1 to 17 the chain is Cytoplasmic; that stretch reads MKLAKKWRDWYIESGKK. Residues 18–38 form a helical membrane-spanning segment; sequence YLFPLLLVCFAVIAYFLVCQM. Over 39 to 289 the chain is Extracellular; sequence TKPESYNVKL…MLHLLDQKMP (251 aa). Positions 112–127 are enriched in basic and acidic residues; the sequence is QEKDTKNKEKAKKENK. Residues 112-140 form a disordered region; that stretch reads QEKDTKNKEKAKKENKPAPAPTSTEDKLK. The helical transmembrane segment at 290 to 310 threads the bilayer; it reads VKQYAGFAIFIIALAAILFLY. Residues 311-324 are Cytoplasmic-facing; the sequence is TKKQTQPKAKKMQT. A helical membrane pass occupies residues 325 to 345; the sequence is MLIFSSVYLVSLFMLFIILFL. Residues 346-349 are Extracellular-facing; sequence ETQN. A run of 2 helical transmembrane segments spans residues 350–370 and 371–391; these read IANI…KILL and NEKY…LTFQ. Position 392 (N392) is a topological domain, extracellular. Residues 393–413 traverse the membrane as a helical segment; it reads DATSGITIFILLSGATSVVML. Topologically, residues 414–421 are cytoplasmic; that stretch reads RDYSRRSA. The helical transmembrane segment at 422 to 442 threads the bilayer; sequence IMLSGFMVGLINMIYVLLLLL. The Extracellular portion of the chain corresponds to 443–457; sequence INNSTLLQVSTLMAL. The chain crosses the membrane as a helical span at residues 458-478; sequence GYAFLGGFGAFILGVGVIPLF. Residues 479 to 718 are Cytoplasmic-facing; that stretch reads ETIFGLLTTS…QRIQYPDDKD (240 aa). The 143-residue stretch at 511 to 653 folds into the HD domain; that stretch reads TYHHSMMVAN…INISDSVEAA (143 aa). H514, H543, and D544 together coordinate Mn(2+). Substrate is bound at residue H514. Residues 544-547 and 555-556 each bind substrate; these read DIGK and VE. Mn(2+) contacts are provided by H580, H604, and H605. The substrate site is built by Y631 and D648. D648 lines the Mn(2+) pocket.

This sequence belongs to the PgpH phosphodiesterase family. Mn(2+) serves as cofactor.

Its subcellular location is the cell membrane. It catalyses the reaction 3',3'-c-di-AMP + H2O = 5'-O-phosphonoadenylyl-(3'-&gt;5')-adenosine + H(+). With respect to regulation, c-di-AMP hydrolysis inhibited by ppGpp, without altering c-di-AMP binding. Functionally, a phosphodiesterase (PDE) that hydrolyzes cyclic di-3',5'-adenylate (c-di-AMP); there are at least 2 PDEs for c-di-AMP in this bacteria (this and pdeA), this may be the major PDE for growth in liquid culture. During host infection c-di-AMP is secreted into the host cytoplasm which leads to interferon-beta production and secretion by the host. The cytoplasmic HD domain binds and hydrolyzes c-di-AMP to 5'-pApA; has very low activity against c-di-GMP, does not hydrolyze ppGpp. This chain is Cyclic-di-AMP phosphodiesterase PgpH, found in Listeria monocytogenes serotype 1/2a (strain 10403S).